A 198-amino-acid chain; its full sequence is Protein RD3-like (198 aa).

Positions 28-57 (KTLLRELKWHLKERERLIQEIENEQKVKKT) form a coiled coil. Residues 133 to 168 (GSEQEDLEDSGSMDCSAPSVIQGDSSKRADKDEIPT) are disordered. Residues 157–166 (SSKRADKDEI) are compositionally biased toward basic and acidic residues.

This chain is Protein RD3-like (RD3L), found in Homo sapiens (Human).